We begin with the raw amino-acid sequence, 80 residues long: RNA-binding protein Hfq (80 aa).

The Sm domain maps to 10–70 (DLFLNTVRKQ…ISTIMPGQPM (61 aa)).

It belongs to the Hfq family. Homohexamer.

Functionally, RNA chaperone that binds small regulatory RNA (sRNAs) and mRNAs to facilitate mRNA translational regulation in response to envelope stress, environmental stress and changes in metabolite concentrations. Also binds with high specificity to tRNAs. The protein is RNA-binding protein Hfq of Agrobacterium fabrum (strain C58 / ATCC 33970) (Agrobacterium tumefaciens (strain C58)).